The following is a 141-amino-acid chain: Suppressor of RNA silencing (141 aa).

2 short sequence motifs (bipartite nuclear localization signal) span residues 75-91 (RKRVETRNREIWKQIRR) and 111-128 (KKKFKEDREFGTPKRFLR). Residues 94–117 (AENMSATAKKSHNSKTSKKKFKED) form a disordered region. The segment covering 102–113 (KKSHNSKTSKKK) has biased composition (basic residues).

The protein resides in the host cytoplasm. Its subcellular location is the host nucleus. In terms of biological role, weak suppressor of RNA-mediated gene silencing, also known as post-transcriptional gene silencing (PTGS), a mechanism of plant viral defense that performs sequence-specific inhibition of viral mRNAs expression. This could be used by the virus to infect efficiently the host the meristem cells. The sequence is that of Suppressor of RNA silencing from Tobacco rattle virus (isolate PpK20) (TRV).